Consider the following 714-residue polypeptide: Structure-specific endonuclease subunit SLX4 1 (714 aa).

Basic and acidic residues-rich tracts occupy residues 1–14 (MSPE…EDNL) and 24–34 (IHEETLAEESH). Disordered stretches follow at residues 1–116 (MSPE…QGSI) and 337–369 (DSSG…KTPQ). Low complexity predominate over residues 36 to 46 (QSIQRSISRLS). Basic residues predominate over residues 79-92 (KTKKRKLKVSKPRK).

Belongs to the SLX4 family. In terms of assembly, forms a heterodimer with SLX1. Post-translationally, phosphorylated in response to DNA damage.

The protein resides in the nucleus. Its function is as follows. Regulatory subunit of the SLX1-SLX4 structure-specific endonuclease that resolves DNA secondary structures generated during DNA repair and recombination. Has endonuclease activity towards branched DNA substrates, introducing single-strand cuts in duplex DNA close to junctions with ss-DNA. The protein is Structure-specific endonuclease subunit SLX4 1 of Candida tropicalis (strain ATCC MYA-3404 / T1) (Yeast).